The chain runs to 303 residues: Ribonuclease Z (303 aa).

Zn(2+) is bound by residues His-61, His-63, Asp-65, His-66, His-138, Asp-206, and His-265. Asp-65 serves as the catalytic Proton acceptor.

It belongs to the RNase Z family. As to quaternary structure, homodimer. The cofactor is Zn(2+).

The enzyme catalyses Endonucleolytic cleavage of RNA, removing extra 3' nucleotides from tRNA precursor, generating 3' termini of tRNAs. A 3'-hydroxy group is left at the tRNA terminus and a 5'-phosphoryl group is left at the trailer molecule.. In terms of biological role, zinc phosphodiesterase, which displays some tRNA 3'-processing endonuclease activity. Probably involved in tRNA maturation, by removing a 3'-trailer from precursor tRNA. The chain is Ribonuclease Z from Agathobacter rectalis (strain ATCC 33656 / DSM 3377 / JCM 17463 / KCTC 5835 / VPI 0990) (Eubacterium rectale).